Consider the following 845-residue polypeptide: MSENNNDKITVKKTLTLKRSVLETSTVKQNFSHGRTKAVVVETKRRKITRTDEKAETSQPITKPHVAPQRSKPRFEEAKPSESSMAKSNLSSAEMEARLRALEEAHIQERITREKVEEQARRIKEREESLRQAVQETEIHQEEQKEEKNPPVQTSPLSSAHSSIEPIDIAITPKNITVTEKRKADEIKNDDRHSRRANPAKSEVRTPKVVKGANERRRGKLTLNSALDEEGSVRGRSMAAMRRRQEKFKRAQNQEPKEKISREVVIPETITIQELAQRMAERSVDVIKFLMKQEQMMKPGDVIDADVAELIAVEFGHTVKRVLESDVEEGIFNIADNPQKMQPRPPVVTIMGHVDHGKTSLLDAIRKANVVSGEAGGITQHIGAYQVEQNGQKITFIDTPGHAAFTAMRARGARVTDIAVLVVAADDSVMPQTVESINHAKAAGVPIIVAINKIDKPAADAQKVRTELLQHEVFVETMGGETLEVEVSAKTGQNLVKLLEAILLQAELLDLKADPKRTAEGVVIEAKLDRGRGSVATVLVQKGTLHPSDIIVAGNEWGRVRALIDDHGRHVKEAVPSTPIEILGMQGTPQAGDRFAVVTHEAKAREIAEYRQRLARDKAVARQTGSRSSLEQMMTKLQTTGIKEFPLIVKGDVQGSIEAIASALEKLGNEEVRARIVHSGAGGITESDISLAEASNSAVIGFNVRANKQACALAKTQGIEIRYYNIIYDLVDDIKAAMSGLLSPEQRETFLGNAEILEVFNITKIGKVAGCRVIEGKIERGAGVRLIRDNIVIHEGKLKTLKRFKDEVNEVQSGQECGIAFENYEDIRAGDTIEIFRIEHINRTL.

Disordered regions lie at residues 45–91 (RRKI…SNLS) and 127–209 (EESL…TPKV). Residues 81-91 (SESSMAKSNLS) are compositionally biased toward polar residues. Basic and acidic residues predominate over residues 137 to 149 (TEIHQEEQKEEKN). Positions 151–162 (PVQTSPLSSAHS) are enriched in polar residues. The span at 179–193 (TEKRKADEIKNDDRH) shows a compositional bias: basic and acidic residues. A tr-type G domain is found at 343–512 (PRPPVVTIMG…LLQAELLDLK (170 aa)). Positions 352 to 359 (GHVDHGKT) are G1. A GTP-binding site is contributed by 352–359 (GHVDHGKT). Positions 377 to 381 (GITQH) are G2. The segment at 398-401 (DTPG) is G3. Residues 398–402 (DTPGH) and 452–455 (NKID) each bind GTP. A G4 region spans residues 452–455 (NKID). Residues 488–490 (SAK) form a G5 region.

The protein belongs to the TRAFAC class translation factor GTPase superfamily. Classic translation factor GTPase family. IF-2 subfamily.

The protein localises to the cytoplasm. Its function is as follows. One of the essential components for the initiation of protein synthesis. Protects formylmethionyl-tRNA from spontaneous hydrolysis and promotes its binding to the 30S ribosomal subunits. Also involved in the hydrolysis of GTP during the formation of the 70S ribosomal complex. This chain is Translation initiation factor IF-2, found in Bartonella quintana (strain Toulouse) (Rochalimaea quintana).